A 181-amino-acid chain; its full sequence is Sodium/potassium-transporting ATPase subunit beta-1-interacting protein 3 (181 aa).

A run of 4 helical transmembrane segments spans residues threonine 5–leucine 22, alanine 35–isoleucine 55, isoleucine 62–phenylalanine 82, and alanine 151–isoleucine 171.

It belongs to the NKAIN family. In terms of assembly, interacts with atp1b1 C-terminus.

The protein resides in the cell membrane. In Xenopus tropicalis (Western clawed frog), this protein is Sodium/potassium-transporting ATPase subunit beta-1-interacting protein 3 (nkain3).